Here is a 385-residue protein sequence, read N- to C-terminus: Di-N-acetylchitobiase (385 aa).

A signal peptide spans 1–38 (MSRPQLRRWRLVSSPPSGVPGLALLALLALLALRLAAG). Positions 39 to 385 (TDCPCPEPEL…EVLKPKLLQR (347 aa)) constitute a GH18 domain. The active-site Proton donor is glutamate 143. Asparagine 193, asparagine 228, asparagine 262, and asparagine 299 each carry an N-linked (GlcNAc...) asparagine glycan.

Belongs to the glycosyl hydrolase 18 family.

It is found in the lysosome. Functionally, involved in the degradation of asparagine-linked glycoproteins. Hydrolyze of N-acetyl-beta-D-glucosamine (1-4)N-acetylglucosamine chitobiose core from the reducing end of the bond, it requires prior cleavage by glycosylasparaginase. The chain is Di-N-acetylchitobiase (CTBS) from Homo sapiens (Human).